The primary structure comprises 292 residues: Probable 2-(5''-triphosphoribosyl)-3'-dephosphocoenzyme-A synthase (292 aa).

This sequence belongs to the CitG/MdcB family.

It carries out the reaction 3'-dephospho-CoA + ATP = 2'-(5''-triphospho-alpha-D-ribosyl)-3'-dephospho-CoA + adenine. In terms of biological role, involved in the formation of 2-(5''-phosphoribosyl)-3'-dephosphocoenzyme-A, the prosthetic group of the acyl-carrier protein of the malonate decarboxylase. The chain is Probable 2-(5''-triphosphoribosyl)-3'-dephosphocoenzyme-A synthase from Azotobacter vinelandii (strain DJ / ATCC BAA-1303).